Reading from the N-terminus, the 467-residue chain is Microtubule-associated tyrosine carboxypeptidase 1 (467 aa).

The span at 1 to 10 (MVLDSGTQVY) shows a compositional bias: polar residues. Disordered stretches follow at residues 1-40 (MVLD…PLYP) and 77-111 (MRRS…TLRP). Histidine 276 is a binding site for Zn(2+). Residue glutamate 277 is the Nucleophile of the active site. Zn(2+) is bound by residues histidine 281 and glutamate 312.

This sequence belongs to the peptidase MATCAP family. Requires Zn(2+) as cofactor.

Its subcellular location is the cytoplasm. The protein resides in the cytoskeleton. It carries out the reaction C-terminal L-alpha-aminoacyl-L-glutamyl-L-glutamyl-L-tyrosyl-[tubulin] + H2O = C-terminal L-alpha-aminoacyl-L-glutamyl-L-glutamyl-[tubulin] + L-tyrosine. The enzyme catalyses C-terminal L-alpha-aminoacyl-L-glutamyl-L-glutamyl-L-phenylalanyl-[tubulin] + H2O = C-terminal L-alpha-aminoacyl-L-glutamyl-L-glutamyl-[tubulin] + L-phenylalanine. Tyrosine carboxypeptidase that removes the C-terminal tyrosine residue of alpha-tubulin, thereby regulating microtubule dynamics and function. Also able to remove the C-terminal phenylalanine residue of alpha-tubulin TUBA8. Recognizes adjacent tubulin dimers along the same protofilament. This Mus musculus (Mouse) protein is Microtubule-associated tyrosine carboxypeptidase 1.